Reading from the N-terminus, the 164-residue chain is S-ribosylhomocysteine lyase (164 aa).

Fe cation is bound by residues histidine 54, histidine 58, and cysteine 128.

The protein belongs to the LuxS family. In terms of assembly, homodimer. Fe cation is required as a cofactor.

It catalyses the reaction S-(5-deoxy-D-ribos-5-yl)-L-homocysteine = (S)-4,5-dihydroxypentane-2,3-dione + L-homocysteine. Functionally, involved in the synthesis of autoinducer 2 (AI-2) which is secreted by bacteria and is used to communicate both the cell density and the metabolic potential of the environment. The regulation of gene expression in response to changes in cell density is called quorum sensing. Catalyzes the transformation of S-ribosylhomocysteine (RHC) to homocysteine (HC) and 4,5-dihydroxy-2,3-pentadione (DPD). The chain is S-ribosylhomocysteine lyase from Campylobacter jejuni subsp. doylei (strain ATCC BAA-1458 / RM4099 / 269.97).